Reading from the N-terminus, the 589-residue chain is ATP-dependent lipid A-core flippase (589 aa).

5 consecutive transmembrane segments (helical) span residues 29–49 (LLLV…TGFL), 70–90 (WLPV…YITD), 157–177 (VIGA…TILV), 261–281 (MIGA…ALAG), and 283–303 (LTAG…PGLK). Residues 32 to 314 (VAALIAALIE…LTNVQNMVQR (283 aa)) enclose the ABC transmembrane type-1 domain. Residues 346–582 (IEFRDVTARY…GGLYSHLHGM (237 aa)) enclose the ABC transporter domain. Residue 380 to 387 (GRSGSGKS) coordinates ATP.

The protein belongs to the ABC transporter superfamily. Lipid exporter (TC 3.A.1.106) family. In terms of assembly, homodimer.

It is found in the cell inner membrane. It carries out the reaction ATP + H2O + lipid A-core oligosaccharideSide 1 = ADP + phosphate + lipid A-core oligosaccharideSide 2.. Its function is as follows. Involved in lipopolysaccharide (LPS) biosynthesis. Translocates lipid A-core from the inner to the outer leaflet of the inner membrane. Transmembrane domains (TMD) form a pore in the inner membrane and the ATP-binding domain (NBD) is responsible for energy generation. The chain is ATP-dependent lipid A-core flippase from Xanthomonas euvesicatoria pv. vesicatoria (strain 85-10) (Xanthomonas campestris pv. vesicatoria).